The sequence spans 189 residues: dCTP deaminase (189 aa).

DCTP-binding positions include 112–117 (KSTYAR), 136–138 (TLE), Gln-157, Tyr-171, and Gln-181. The Proton donor/acceptor role is filled by Glu-138.

Belongs to the dCTP deaminase family. As to quaternary structure, homotrimer.

The enzyme catalyses dCTP + H2O + H(+) = dUTP + NH4(+). Its pathway is pyrimidine metabolism; dUMP biosynthesis; dUMP from dCTP (dUTP route): step 1/2. Functionally, catalyzes the deamination of dCTP to dUTP. The sequence is that of dCTP deaminase from Albidiferax ferrireducens (strain ATCC BAA-621 / DSM 15236 / T118) (Rhodoferax ferrireducens).